The primary structure comprises 511 residues: 2,3-bisphosphoglycerate-independent phosphoglycerate mutase (511 aa).

Residue D12 coordinates Mn(2+). Position 36 is a phosphotyrosine (Y36). S62 serves as a coordination point for Mn(2+). The Phosphoserine intermediate role is filled by S62. Substrate-binding positions include H123, 153–154 (RD), R185, R191, 261–264 (RPDR), and K336. D403, H407, D444, H445, and H462 together coordinate Mn(2+).

This sequence belongs to the BPG-independent phosphoglycerate mutase family. Monomer. It depends on Mn(2+) as a cofactor.

It catalyses the reaction (2R)-2-phosphoglycerate = (2R)-3-phosphoglycerate. It participates in carbohydrate degradation; glycolysis; pyruvate from D-glyceraldehyde 3-phosphate: step 3/5. Could be inhibited during sporulation by acidification of the forespore, thus allowing accumulation of the spore's large depot of 3-phosphoglyceric acid. Essential for rapid growth and for sporulation. Catalyzes the interconversion of 2-phosphoglycerate (2-PGA) and 3-phosphoglycerate (3-PGA). The sequence is that of 2,3-bisphosphoglycerate-independent phosphoglycerate mutase from Geobacillus stearothermophilus (Bacillus stearothermophilus).